A 54-amino-acid polypeptide reads, in one-letter code: MASKKGNRIIIKMRSTESAHTYTTTKNRKNDPNRLELRRYDPTLRRHVLYRETK.

It belongs to the bacterial ribosomal protein bL33 family.

This chain is Large ribosomal subunit protein bL33, found in Roseiflexus castenholzii (strain DSM 13941 / HLO8).